Reading from the N-terminus, the 83-residue chain is Kappa-theraphotoxin-Cg2b (83 aa).

The signal sequence occupies residues Met-1 to Ala-21. Positions Glu-22–Arg-53 are excised as a propeptide. 3 disulfides stabilise this stretch: Cys-55–Cys-69, Cys-62–Cys-74, and Cys-68–Cys-78.

It belongs to the neurotoxin 30 (phrixotoxin) family. In terms of tissue distribution, expressed by the venom gland.

It localises to the secreted. In terms of biological role, probable ion channel inhibitor. The sequence is that of Kappa-theraphotoxin-Cg2b from Chilobrachys guangxiensis (Chinese earth tiger tarantula).